We begin with the raw amino-acid sequence, 125 residues long: Small ribosomal subunit protein uS12 (125 aa).

Asp-89 bears the 3-methylthioaspartic acid mark. A disordered region spans residues 104–125; that stretch reads TAGVKDRSQSRSKYGAKASKQD.

It belongs to the universal ribosomal protein uS12 family. As to quaternary structure, part of the 30S ribosomal subunit. Contacts proteins S8 and S17. May interact with IF1 in the 30S initiation complex.

Its function is as follows. With S4 and S5 plays an important role in translational accuracy. Interacts with and stabilizes bases of the 16S rRNA that are involved in tRNA selection in the A site and with the mRNA backbone. Located at the interface of the 30S and 50S subunits, it traverses the body of the 30S subunit contacting proteins on the other side and probably holding the rRNA structure together. The combined cluster of proteins S8, S12 and S17 appears to hold together the shoulder and platform of the 30S subunit. The chain is Small ribosomal subunit protein uS12 from Prochlorococcus marinus (strain MIT 9303).